Consider the following 233-residue polypeptide: Gamma-glutamyl-hercynylcysteine sulfoxide hydrolase (233 aa).

Residue cysteine 2 is the Nucleophile of the active site. Residues 2–233 (CRHLGWLGAQ…TALDRAKGPR (232 aa)) enclose the Glutamine amidotransferase type-2 domain.

The enzyme catalyses gamma-L-glutamyl-hercynylcysteine S-oxide + H2O = S-(hercyn-2-yl)-L-cysteine S-oxide + L-glutamate. It functions in the pathway amino-acid biosynthesis; ergothioneine biosynthesis. Functionally, catalyzes the hydrolysis of the gamma-glutamyl amide bond of hercynyl-gamma-L-glutamyl-L-cysteine sulfoxide to produce hercynylcysteine sulfoxide, a step in the biosynthesis pathway of ergothioneine. Ergothioneine is an antioxidant that protects mycobacteria from oxidative stress. The polypeptide is Gamma-glutamyl-hercynylcysteine sulfoxide hydrolase (egtC) (Mycobacterium tuberculosis (strain ATCC 25618 / H37Rv)).